The primary structure comprises 179 residues: MNRLKDQYLKEIVPALMSKFNYDSVMEVPKIDKIVINTGVGDATANAKVLDSAVEELALITGQKPVITKAKNSIAGFRLREGMPIGAKVTLRGERMYDFLDKLVTVSLPRVRDFRGVSKKAFDGRGNYTLGVREQLIFPEIDYDQVSKVRGMDVVIVTTAKSDEESHELLTQLGMPFQK.

It belongs to the universal ribosomal protein uL5 family. As to quaternary structure, part of the 50S ribosomal subunit; part of the 5S rRNA/L5/L18/L25 subcomplex. Contacts the 5S rRNA and the P site tRNA. Forms a bridge to the 30S subunit in the 70S ribosome.

Functionally, this is one of the proteins that bind and probably mediate the attachment of the 5S RNA into the large ribosomal subunit, where it forms part of the central protuberance. In the 70S ribosome it contacts protein S13 of the 30S subunit (bridge B1b), connecting the 2 subunits; this bridge is implicated in subunit movement. Contacts the P site tRNA; the 5S rRNA and some of its associated proteins might help stabilize positioning of ribosome-bound tRNAs. The polypeptide is Large ribosomal subunit protein uL5 (Listeria innocua serovar 6a (strain ATCC BAA-680 / CLIP 11262)).